Here is a 348-residue protein sequence, read N- to C-terminus: GMP reductase (348 aa).

108–131 provides a ligand contact to NADP(+); the sequence is ADFIKLRQILALSPSLKFICIDVA. K(+)-binding residues include Gly181 and Gly183. Cys186 acts as the Thioimidate intermediate in catalysis. Position 216–239 (216–239) interacts with NADP(+); sequence IVSDGGCTMPGDVAKAFGGGADFV.

This sequence belongs to the IMPDH/GMPR family. GuaC type 1 subfamily. As to quaternary structure, homotetramer.

It carries out the reaction IMP + NH4(+) + NADP(+) = GMP + NADPH + 2 H(+). Functionally, catalyzes the irreversible NADPH-dependent deamination of GMP to IMP. It functions in the conversion of nucleobase, nucleoside and nucleotide derivatives of G to A nucleotides, and in maintaining the intracellular balance of A and G nucleotides. The sequence is that of GMP reductase from Edwardsiella ictaluri (strain 93-146).